We begin with the raw amino-acid sequence, 199 residues long: CASP-like protein 1D2 (199 aa).

The interval 1–27 is disordered; the sequence is MASTENPDPETGKSEPIPASATPPPSS. N-acetylalanine is present on A2. Over 2 to 36 the chain is Cytoplasmic; it reads ASTENPDPETGKSEPIPASATPPPSSAASFLDCRK. The helical transmembrane segment at 37-57 threads the bilayer; the sequence is IDIITRVLLFSATLTALIVMV. At 58–85 the chain is on the extracellular side; the sequence is TSDQTEMTQLPGVSSPAPVSAEFNDSPA. The chain crosses the membrane as a helical span at residues 86-106; the sequence is FIYFVVALVVASFYALISTLV. Residues 107–129 are Cytoplasmic-facing; that stretch reads SISLLLKPEFTAQFSIYLASLDM. The chain crosses the membrane as a helical span at residues 130–150; that stretch reads VMLGILASATGTAGGVAYIAL. The Extracellular portion of the chain corresponds to 151 to 171; the sequence is KGNEEVGWNKICNVYDKFCRY. The chain crosses the membrane as a helical span at residues 172 to 192; that stretch reads IATSLALSLFASLLLLVLSIW. At 193–199 the chain is on the cytoplasmic side; that stretch reads SALSKRT.

Belongs to the Casparian strip membrane proteins (CASP) family. In terms of assembly, homodimer and heterodimers. In terms of tissue distribution, expressed in the root endodermis and flowers.

It is found in the cell membrane. The polypeptide is CASP-like protein 1D2 (Arabidopsis thaliana (Mouse-ear cress)).